We begin with the raw amino-acid sequence, 108 residues long: Tetrahydromethanopterin S-methyltransferase subunit B (108 aa).

The helical transmembrane segment at 77–99 (FQGMFFGFWVTMAVLVLVTILAV) threads the bilayer.

Belongs to the MtrB family. As to quaternary structure, the complex is composed of 8 subunits; MtrA, MtrB, MtrC, MtrD, MtrE, MtrF, MtrG and MtrH.

It is found in the cell membrane. The catalysed reaction is 5-methyl-5,6,7,8-tetrahydromethanopterin + coenzyme M + 2 Na(+)(in) = 5,6,7,8-tetrahydromethanopterin + methyl-coenzyme M + 2 Na(+)(out). It participates in one-carbon metabolism; methanogenesis from CO(2); methyl-coenzyme M from 5,10-methylene-5,6,7,8-tetrahydromethanopterin: step 2/2. In terms of biological role, part of a complex that catalyzes the formation of methyl-coenzyme M and tetrahydromethanopterin from coenzyme M and methyl-tetrahydromethanopterin. This is an energy-conserving, sodium-ion translocating step. This is Tetrahydromethanopterin S-methyltransferase subunit B from Methanococcus maripaludis (strain DSM 14266 / JCM 13030 / NBRC 101832 / S2 / LL).